The following is a 453-amino-acid chain: Ribulose bisphosphate carboxylase large chain (453 aa).

The propeptide occupies 1–2 (MS). At proline 3 the chain carries N-acetylproline. Lysine 14 is modified (N6,N6,N6-trimethyllysine). Residues asparagine 123 and threonine 173 each coordinate substrate. The active-site Proton acceptor is lysine 175. Lysine 177 is a substrate binding site. Mg(2+)-binding residues include lysine 201, aspartate 203, and glutamate 204. At lysine 201 the chain carries N6-carboxylysine. Catalysis depends on histidine 294, which acts as the Proton acceptor. Residues arginine 295, histidine 327, and serine 379 each contribute to the substrate site.

This sequence belongs to the RuBisCO large chain family. Type I subfamily. As to quaternary structure, heterohexadecamer of 8 large chains and 8 small chains; disulfide-linked. The disulfide link is formed within the large subunit homodimers. It depends on Mg(2+) as a cofactor. Post-translationally, the disulfide bond which can form in the large chain dimeric partners within the hexadecamer appears to be associated with oxidative stress and protein turnover.

It is found in the plastid. Its subcellular location is the chloroplast. It catalyses the reaction 2 (2R)-3-phosphoglycerate + 2 H(+) = D-ribulose 1,5-bisphosphate + CO2 + H2O. It carries out the reaction D-ribulose 1,5-bisphosphate + O2 = 2-phosphoglycolate + (2R)-3-phosphoglycerate + 2 H(+). In terms of biological role, ruBisCO catalyzes two reactions: the carboxylation of D-ribulose 1,5-bisphosphate, the primary event in carbon dioxide fixation, as well as the oxidative fragmentation of the pentose substrate in the photorespiration process. Both reactions occur simultaneously and in competition at the same active site. This is Ribulose bisphosphate carboxylase large chain from Sherardia arvensis (Blue field-madder).